The chain runs to 513 residues: Probable lipid II flippase MurJ (513 aa).

15 helical membrane passes run 3–23, 25–45, 83–103, 133–153, 162–182, 186–206, 221–241, 245–265, 271–291, 313–333, 354–374, 382–402, 405–425, 441–461, and 481–501; these read ILKSLISLSLITFISRILGFM, DLLIAYSFGASGITDAFFLAF, FISNILGLMIIILSLFTAFGI, IMFPYIFFVSLGSLTGSILNA, YSSIFLNLSMIMFISFVTAYF, ILSLAWAVIVGGVFQILYQFP, ILNLGVLKFLKQIGIVALGMS, VSIIIATISSSFLISGSISWI, LVEFISGIFGVSLSTILLPLL, LVCILVIPSIIILFTLSESLI, IEFYSIGLLPFVLIKILLAGF, TPMKISIFILVLTQLMNIFFI, FQYTSFALAISLASWINFFLL, WLRFLLKIFAAAMVMLILLFI, and LFYICASSGGGYLFTLFCLGL.

It belongs to the MurJ/MviN family.

Its subcellular location is the cell inner membrane. It functions in the pathway cell wall biogenesis; peptidoglycan biosynthesis. Its function is as follows. Involved in peptidoglycan biosynthesis. Transports lipid-linked peptidoglycan precursors from the inner to the outer leaflet of the cytoplasmic membrane. The protein is Probable lipid II flippase MurJ of Buchnera aphidicola subsp. Baizongia pistaciae (strain Bp).